Reading from the N-terminus, the 327-residue chain is Probable pectinesterase A (327 aa).

Positions 1-19 (MHTPYLLGALAALAATAVG) are cleaved as a signal peptide. N-linked (GlcNAc...) asparagine glycosylation occurs at asparagine 84. Glutamine 145 serves as a coordination point for substrate. The active-site Proton donor is the aspartate 168. Aspartate 189 (nucleophile) is an active-site residue. Substrate is bound by residues arginine 249 and tryptophan 251. Asparagine 288 carries an N-linked (GlcNAc...) asparagine glycan.

Belongs to the pectinesterase family.

Its subcellular location is the secreted. It carries out the reaction [(1-&gt;4)-alpha-D-galacturonosyl methyl ester](n) + n H2O = [(1-&gt;4)-alpha-D-galacturonosyl](n) + n methanol + n H(+). The protein operates within glycan metabolism; pectin degradation; 2-dehydro-3-deoxy-D-gluconate from pectin: step 1/5. Its function is as follows. Involved in maceration and soft-rotting of plant tissue. This is Probable pectinesterase A (pmeA) from Aspergillus niger (strain ATCC MYA-4892 / CBS 513.88 / FGSC A1513).